The following is a 277-amino-acid chain: Large ribosomal subunit protein uL2 (277 aa).

Residues 222 to 277 form a disordered region; it reads GVAMNPVDHPHGGGEGRTSGGRHPVTPWGKPTKGKKTRSNKATDKFIMRSRHQRKK.

The protein belongs to the universal ribosomal protein uL2 family. Part of the 50S ribosomal subunit. Forms a bridge to the 30S subunit in the 70S ribosome.

In terms of biological role, one of the primary rRNA binding proteins. Required for association of the 30S and 50S subunits to form the 70S ribosome, for tRNA binding and peptide bond formation. It has been suggested to have peptidyltransferase activity; this is somewhat controversial. Makes several contacts with the 16S rRNA in the 70S ribosome. This is Large ribosomal subunit protein uL2 from Brucella melitensis biotype 1 (strain ATCC 23456 / CCUG 17765 / NCTC 10094 / 16M).